Here is a 137-residue protein sequence, read N- to C-terminus: Competence protein ComGG (137 aa).

A helical membrane pass occupies residues 10-30; that stretch reads GVLLYAVTIAAIFSLLLQFYL. Residues 106 to 137 form a disordered region; that stretch reads EKRDKKEEVATDSSEKVEKKKSEEKPEKKENS.

The transformation pili are flexible filaments, consisting mainly of the major pilin ComGC and smaller amounts of the minor pilins, including at least ComGD, ComGF and ComGG, and perhaps ComGE. Interacts with ComGC; the interaction is probably direct. Interacts with ComGD. Interacts with ComGE. Interacts with ComGF. May act as a link between ComGC, ComGD and ComGF.

It localises to the fimbrium. The protein resides in the cell membrane. Its function is as follows. Required for formation of the type IV-like pilus (T4P) that plays a role in transformation. Transformation pili are dynamically extended and retracted, perhaps thereby promoting DNA uptake and transformation. Required for transformation. The protein is Competence protein ComGG of Streptococcus pneumoniae (strain ATCC BAA-255 / R6).